Here is a 328-residue protein sequence, read N- to C-terminus: Cell cycle control protein 50A (328 aa).

Residues 1–28 (MAMNYSAKDEVDGGPTGPPGGAAKTRRP) form a disordered region. Residue Ala-2 is modified to N-acetylalanine. The segment at 2–48 (AMNYSAKDEVDGGPTGPPGGAAKTRRPDNTAFKQQRLPAWQPILTAG) is required for ATPase and aminophospholipid flippase activity. Over 2 to 49 (AMNYSAKDEVDGGPTGPPGGAAKTRRPDNTAFKQQRLPAWQPILTAGT) the chain is Cytoplasmic. Positions 49-315 (TVLPTFFIIG…LGVVLLVINH (267 aa)) are interaction with ATP8A2. A helical membrane pass occupies residues 50–70 (VLPTFFIIGLIFIPIGIGIFV). Residues 71-292 (TSNNIREIEG…SWMGGKNPFL (222 aa)) are Exoplasmic loop-facing. The tract at residues 102–125 (RDDSQLNGDPSALLNPSKECEPYR) is disordered. A disulfide bridge links Cys-121 with Cys-135. Asn-144 and Asn-261 each carry an N-linked (GlcNAc...) asparagine glycan. Residues 293–313 (GIAYITIGSISFLLGVVLLVI) traverse the membrane as a helical segment. Residues 314-328 (NHKYRNSSNTADITI) lie on the Cytoplasmic side of the membrane.

This sequence belongs to the CDC50/LEM3 family. In terms of assembly, component of various P4-ATPase flippase complexes which consists of a catalytic alpha subunit and an accessory beta subunit. Interacts with ATP8A1 to form a flippase complex; this complex forms an intermediate phosphoenzyme. Interacts with ATP8A2 to form a flippase complex. TP8B1:TMEM30A and ATP8B2:TMEM30A flippase complexes have been shown to form intermediate phosphoenzymes in vitro. Interacts with alpha subunits ATP8A1, ATP8B1, ATP8B2, ATP8B4, ATP10A, ATP10B, ATP10D, ATP11A, ATP11B and ATP11C. Post-translationally, N-glycosylated. Contains high mannose-type oligosaccharides.

Its subcellular location is the membrane. It is found in the golgi apparatus. The protein resides in the cytoplasmic vesicle. It localises to the secretory vesicle membrane. The protein localises to the apical cell membrane. Its subcellular location is the photoreceptor inner segment. It is found in the cell projection. The protein resides in the cilium. It localises to the photoreceptor outer segment. Its function is as follows. Accessory component of a P4-ATPase flippase complex which catalyzes the hydrolysis of ATP coupled to the transport of aminophospholipids from the outer to the inner leaflet of various membranes and ensures the maintenance of asymmetric distribution of phospholipids. Phospholipid translocation also seems to be implicated in vesicle formation and in uptake of lipid signaling molecules. The beta subunit may assist in binding of the phospholipid substrate. Required for the proper folding, assembly and ER to Golgi exit of the ATP8A2:TMEM30A flippase complex. ATP8A2:TMEM30A may be involved in regulation of neurite outgrowth, and, reconstituted to liposomes, predomiminantly transports phosphatidylserine (PS) and to a lesser extent phosphatidylethanolamine (PE). The ATP8A1:TMEM30A flippase complex seems to play a role in regulation of cell migration probably involving flippase-mediated translocation of phosphatidylethanolamine (PE) at the plasma membrane. Required for the formation of the ATP8A2, ATP8B1 and ATP8B2 P-type ATPAse intermediate phosphoenzymes. Involved in uptake of platelet-activating factor (PAF). Can also mediate the export of alpha subunits ATP8A1, ATP8B1, ATP8B2, ATP8B4, ATP10A, ATP10B, ATP10D, ATP11A, ATP11B and ATP11C from ER to other membrane localizations. This Rattus norvegicus (Rat) protein is Cell cycle control protein 50A.